The sequence spans 196 residues: Putative archaetidylserine decarboxylase proenzyme (196 aa).

The active-site Schiff-base intermediate with substrate; via pyruvic acid is serine 164. Serine 164 is modified (pyruvic acid (Ser); by autocatalysis).

The protein belongs to the phosphatidylserine decarboxylase family. PSD-A subfamily. Heterodimer of a large membrane-associated beta subunit and a small pyruvoyl-containing alpha subunit. Pyruvate serves as cofactor. Is synthesized initially as an inactive proenzyme. Formation of the active enzyme involves a self-maturation process in which the active site pyruvoyl group is generated from an internal serine residue via an autocatalytic post-translational modification. Two non-identical subunits are generated from the proenzyme in this reaction, and the pyruvate is formed at the N-terminus of the alpha chain, which is derived from the carboxyl end of the proenzyme. The post-translation cleavage follows an unusual pathway, termed non-hydrolytic serinolysis, in which the side chain hydroxyl group of the serine supplies its oxygen atom to form the C-terminus of the beta chain, while the remainder of the serine residue undergoes an oxidative deamination to produce ammonia and the pyruvoyl prosthetic group on the alpha chain.

It localises to the cell membrane. The enzyme catalyses archaetidylserine + H(+) = archaetidylethanolamine + CO2. In terms of biological role, catalyzes the formation of archaetidylethanolamine (PtdEtn) from archaetidylserine (PtdSer). The chain is Putative archaetidylserine decarboxylase proenzyme from Halobacterium salinarum (strain ATCC 700922 / JCM 11081 / NRC-1) (Halobacterium halobium).